A 349-amino-acid polypeptide reads, in one-letter code: Putative inosamine-phosphate amidinotransferase 2 (349 aa).

It belongs to the amidinotransferase family.

The enzyme catalyses 1-amino-1-deoxy-scyllo-inositol 4-phosphate + L-arginine = 1-guanidino-1-deoxy-scyllo-inositol 4-phosphate + L-ornithine. It participates in antibiotic biosynthesis; streptomycin biosynthesis. Functionally, it is not obvious if strB2 participates in streptomycin biosynthesis as an inosamine-phosphate amidinotransferase. Attempt to measure its activity have failed and the nucleophilic cysteine which is the key residue for amidine transfer is not conserved but replaced by a glycine residue. The sequence is that of Putative inosamine-phosphate amidinotransferase 2 (strB2) from Streptomyces griseus.